The following is a 393-amino-acid chain: CCA-adding enzyme (393 aa).

ATP contacts are provided by Gly-27 and Arg-30. CTP contacts are provided by Gly-27 and Arg-30. Mg(2+)-binding residues include Asp-40 and Asp-42. ATP-binding residues include Arg-111, Asp-154, Arg-157, Arg-160, and Arg-163. CTP-binding residues include Arg-111, Asp-154, Arg-157, Arg-160, and Arg-163.

It belongs to the tRNA nucleotidyltransferase/poly(A) polymerase family. Bacterial CCA-adding enzyme type 3 subfamily. As to quaternary structure, homodimer. Mg(2+) serves as cofactor.

The catalysed reaction is a tRNA precursor + 2 CTP + ATP = a tRNA with a 3' CCA end + 3 diphosphate. The enzyme catalyses a tRNA with a 3' CCA end + 2 CTP + ATP = a tRNA with a 3' CCACCA end + 3 diphosphate. Catalyzes the addition and repair of the essential 3'-terminal CCA sequence in tRNAs without using a nucleic acid template. Adds these three nucleotides in the order of C, C, and A to the tRNA nucleotide-73, using CTP and ATP as substrates and producing inorganic pyrophosphate. tRNA 3'-terminal CCA addition is required both for tRNA processing and repair. Also involved in tRNA surveillance by mediating tandem CCA addition to generate a CCACCA at the 3' terminus of unstable tRNAs. While stable tRNAs receive only 3'-terminal CCA, unstable tRNAs are marked with CCACCA and rapidly degraded. The sequence is that of CCA-adding enzyme from Listeria innocua serovar 6a (strain ATCC BAA-680 / CLIP 11262).